We begin with the raw amino-acid sequence, 482 residues long: Signal recognition particle protein (482 aa).

GTP is bound by residues 107–114 (GLQGTGKT), 189–193 (DTAGR), and 247–250 (TKLD). Disordered stretches follow at residues 380–413 (MTTEERKNPDLLAKSPSRRRRIAQGSGHSETDVS) and 452–482 (FGGQPGPGFRGYRGGGGKPKKKKKKKGFGQL). Residues 452-468 (FGGQPGPGFRGYRGGGG) are compositionally biased toward gly residues. Over residues 469-482 (KPKKKKKKKGFGQL) the composition is skewed to basic residues.

Belongs to the GTP-binding SRP family. SRP54 subfamily. Part of the signal recognition particle protein translocation system, which is composed of SRP and FtsY.

Its subcellular location is the cytoplasm. It carries out the reaction GTP + H2O = GDP + phosphate + H(+). Its function is as follows. Involved in targeting and insertion of nascent membrane proteins into the cytoplasmic membrane. Binds to the hydrophobic signal sequence of the ribosome-nascent chain (RNC) as it emerges from the ribosomes. The SRP-RNC complex is then targeted to the cytoplasmic membrane where it interacts with the SRP receptor FtsY. The protein is Signal recognition particle protein of Synechocystis sp. (strain ATCC 27184 / PCC 6803 / Kazusa).